We begin with the raw amino-acid sequence, 151 residues long: MFGGAHELSIDSKGRLAVPAKFRDILSRLYTPAVVATLESKHKLLMYPVAEWEKVAAQLLNLKVADNPVLRRFQNLLLHNAEILEWDSAGRVLVPAGLRKRVDFDREVVLVGRANRLELWGREQWEAEMVQALDDDPDELAFQLSQTDLQL.

SpoVT-AbrB domains lie at 5–51 (AHEL…PVAE) and 81–124 (AEIL…GREQ).

This sequence belongs to the MraZ family. As to quaternary structure, forms oligomers.

The protein resides in the cytoplasm. Its subcellular location is the nucleoid. This is Transcriptional regulator MraZ from Neisseria gonorrhoeae (strain ATCC 700825 / FA 1090).